Reading from the N-terminus, the 765-residue chain is 5-methyltetrahydropteroyltriglutamate--homocysteine methyltransferase 1 (765 aa).

5-methyltetrahydropteroyltri-L-glutamate is bound by residues lysine 18 and asparagine 116. 437-439 (IGS) serves as a coordination point for L-homocysteine. L-methionine-binding positions include 437-439 (IGS) and glutamate 490. 5-methyltetrahydropteroyltri-L-glutamate contacts are provided by residues 521–522 (RC) and tryptophan 567. An L-homocysteine-binding site is contributed by aspartate 605. Aspartate 605 contributes to the L-methionine binding site. Residues histidine 647, cysteine 649, histidine 658, aspartate 662, and glutamate 671 each contribute to the Zn(2+) site. Residue histidine 701 is the Proton donor of the active site. Cysteine 733 provides a ligand contact to Zn(2+).

Belongs to the vitamin-B12 independent methionine synthase family. It depends on Zn(2+) as a cofactor. In terms of tissue distribution, expressed in leaves, stems, flowers, siliques and seeds.

It is found in the cytoplasm. Its subcellular location is the cytosol. It carries out the reaction 5-methyltetrahydropteroyltri-L-glutamate + L-homocysteine = tetrahydropteroyltri-L-glutamate + L-methionine. It participates in amino-acid biosynthesis; L-methionine biosynthesis via de novo pathway; L-methionine from L-homocysteine (MetE route): step 1/1. Catalyzes the transfer of a methyl group from 5-methyltetrahydrofolate to homocysteine resulting in methionine formation. This is 5-methyltetrahydropteroyltriglutamate--homocysteine methyltransferase 1 (MS1) from Arabidopsis thaliana (Mouse-ear cress).